The sequence spans 469 residues: Glutamine synthetase (469 aa).

One can recognise a GS beta-grasp domain in the interval 15–96; the sequence is EDVKFVDVRF…INFFIHDPIT (82 aa). Positions 104–469 constitute a GS catalytic domain; sequence PRNVAKKAEA…PHEFEMYFDV (366 aa). Mg(2+) contacts are provided by E129 and E131. E205 provides a ligand contact to ATP. Mg(2+)-binding residues include E210 and E218. 221–223 is an ATP binding site; that stretch reads YKF. L-glutamate contacts are provided by residues 262-263 and G263; that span reads NG. Residue H267 participates in Mg(2+) binding. ATP is bound by residues 269–271 and S271; that span reads HQS. L-glutamate-binding residues include R320, E326, and R338. ATP contacts are provided by R338, R343, and K352. Mg(2+) is bound at residue E357. R359 serves as a coordination point for L-glutamate. The residue at position 397 (Y397) is an O-AMP-tyrosine.

Belongs to the glutamine synthetase family. In terms of assembly, oligomer of 12 subunits arranged in the form of two hexagons. Requires Mg(2+) as cofactor.

It localises to the cytoplasm. It carries out the reaction L-glutamate + NH4(+) + ATP = L-glutamine + ADP + phosphate + H(+). The activity of this enzyme could be controlled by adenylation under conditions of abundant glutamine. Functionally, catalyzes the ATP-dependent biosynthesis of glutamine from glutamate and ammonia. Complements L-glutamine auxotrophy of an E.coli glnA mutant. The sequence is that of Glutamine synthetase from Streptomyces coelicolor (strain ATCC BAA-471 / A3(2) / M145).